A 154-amino-acid chain; its full sequence is D-aminoacyl-tRNA deacylase (154 aa).

Positions Gly142–Pro143 match the Gly-cisPro motif, important for rejection of L-amino acids motif.

This sequence belongs to the DTD family. In terms of assembly, homodimer.

The protein localises to the cytoplasm. The catalysed reaction is glycyl-tRNA(Ala) + H2O = tRNA(Ala) + glycine + H(+). The enzyme catalyses a D-aminoacyl-tRNA + H2O = a tRNA + a D-alpha-amino acid + H(+). In terms of biological role, an aminoacyl-tRNA editing enzyme that deacylates mischarged D-aminoacyl-tRNAs. Also deacylates mischarged glycyl-tRNA(Ala), protecting cells against glycine mischarging by AlaRS. Acts via tRNA-based rather than protein-based catalysis; rejects L-amino acids rather than detecting D-amino acids in the active site. By recycling D-aminoacyl-tRNA to D-amino acids and free tRNA molecules, this enzyme counteracts the toxicity associated with the formation of D-aminoacyl-tRNA entities in vivo and helps enforce protein L-homochirality. This is D-aminoacyl-tRNA deacylase (DTD1) from Yarrowia lipolytica (strain CLIB 122 / E 150) (Yeast).